A 205-amino-acid polypeptide reads, in one-letter code: Thymidylate kinase (205 aa).

10-17 (GIDGAGKT) is an ATP binding site.

Belongs to the thymidylate kinase family.

The catalysed reaction is dTMP + ATP = dTDP + ADP. Phosphorylation of dTMP to form dTDP in both de novo and salvage pathways of dTTP synthesis. The sequence is that of Thymidylate kinase from Nitrosospira multiformis (strain ATCC 25196 / NCIMB 11849 / C 71).